Consider the following 245-residue polypeptide: DNA repair protein RecO (245 aa).

It belongs to the RecO family.

Functionally, involved in DNA repair and RecF pathway recombination. This chain is DNA repair protein RecO, found in Erwinia tasmaniensis (strain DSM 17950 / CFBP 7177 / CIP 109463 / NCPPB 4357 / Et1/99).